The following is a 213-amino-acid chain: CDP-diacylglycerol--inositol 3-phosphatidyltransferase (213 aa).

The Cytoplasmic segment spans residues 1-5 (MPEEN). The chain crosses the membrane as a helical span at residues 6-26 (IFLFVPNLIGYARIVFAIISF). A topological domain (lumenal) is located at residue Tyr-27. A helical membrane pass occupies residues 28 to 48 (FMPCCPFTASSFYLLSGLLDA). Residues Asp-47 and Asp-50 each contribute to the Mg(2+) site. The Cytoplasmic portion of the chain corresponds to 49–73 (FDGHAARALNQGTRFGAMLDMLTDR). Positions 51, 55, and 61 each coordinate a CDP-1,2-diacyl-sn-glycerol. 2 residues coordinate Mg(2+): Asp-68 and Asp-72. Residue Asp-72 is the Proton acceptor of the active site. A helical transmembrane segment spans residues 74–94 (CATMCLLVNLALLYPRATLLF). Gln-95 is a topological domain (lumenal). Residues 96–116 (LSMSLDVASHWLHLHSSVVRG) traverse the membrane as a helical segment. Residues 117–139 (SESHKMIDLSGNPVLRIYYTSRP) are Cytoplasmic-facing. The chain crosses the membrane as a helical span at residues 140-160 (ALFTLCAGNELFYCLLYLFNF). The Lumenal portion of the chain corresponds to 161 to 174 (SEGPLVGSVGLFRM). Residues 175–195 (GLWVTAPIALLKSVISVIHLI) form a helical membrane-spanning segment. At 196–213 (TAARNMAALDAADRAKKK) the chain is on the cytoplasmic side.

This sequence belongs to the CDP-alcohol phosphatidyltransferase class-I family. Mn(2+) serves as cofactor. The cofactor is Mg(2+).

It is found in the endoplasmic reticulum membrane. The protein resides in the cell membrane. The catalysed reaction is a CDP-1,2-diacyl-sn-glycerol + myo-inositol = a 1,2-diacyl-sn-glycero-3-phospho-(1D-myo-inositol) + CMP + H(+). Functionally, catalyzes the biosynthesis of phosphatidylinositol (PtdIns) as well as PtdIns:inositol exchange reaction. May thus act to reduce an excessive cellular PtdIns content. The exchange activity is due to the reverse reaction of PtdIns synthase and is dependent on CMP, which is tightly bound to the enzyme. This Mus musculus (Mouse) protein is CDP-diacylglycerol--inositol 3-phosphatidyltransferase.